Here is a 259-residue protein sequence, read N- to C-terminus: Large ribosomal subunit protein uL3m (259 aa).

The N-terminal 15 residues, 1-15, are a transit peptide targeting the mitochondrion; sequence MQSRFLISPTLIRTF. Residues 176 to 197 show a composition bias toward polar residues; sequence ASHGASLSHRTPGSTGQNTTPS. A disordered region spans residues 176 to 208; that stretch reads ASHGASLSHRTPGSTGQNTTPSRVLPGRKMAGH.

The protein belongs to the universal ribosomal protein uL3 family. In terms of assembly, component of the mitochondrial large ribosomal subunit (mt-LSU). Mature yeast 74S mitochondrial ribosomes consist of a small (37S) and a large (54S) subunit. The 37S small subunit contains a 15S ribosomal RNA (15S mt-rRNA) and at least 32 different proteins. The 54S large subunit contains a 21S rRNA (21S mt-rRNA) and at least 45 different proteins.

It is found in the cytoplasm. The protein localises to the mitochondrion. Its function is as follows. Component of the mitochondrial ribosome (mitoribosome), a dedicated translation machinery responsible for the synthesis of mitochondrial genome-encoded proteins, including at least some of the essential transmembrane subunits of the mitochondrial respiratory chain. The mitoribosomes are attached to the mitochondrial inner membrane and translation products are cotranslationally integrated into the membrane. The sequence is that of Large ribosomal subunit protein uL3m (mrpl9) from Schizosaccharomyces pombe (strain 972 / ATCC 24843) (Fission yeast).